The chain runs to 222 residues: Probable transaldolase (222 aa).

Lysine 91 (schiff-base intermediate with substrate) is an active-site residue.

The protein belongs to the transaldolase family. Type 3B subfamily.

The protein resides in the cytoplasm. The catalysed reaction is D-sedoheptulose 7-phosphate + D-glyceraldehyde 3-phosphate = D-erythrose 4-phosphate + beta-D-fructose 6-phosphate. The protein operates within carbohydrate degradation; pentose phosphate pathway; D-glyceraldehyde 3-phosphate and beta-D-fructose 6-phosphate from D-ribose 5-phosphate and D-xylulose 5-phosphate (non-oxidative stage): step 2/3. Transaldolase is important for the balance of metabolites in the pentose-phosphate pathway. The sequence is that of Probable transaldolase from Chlorobaculum parvum (strain DSM 263 / NCIMB 8327) (Chlorobium vibrioforme subsp. thiosulfatophilum).